Here is a 362-residue protein sequence, read N- to C-terminus: S-adenosylmethionine decarboxylase proenzyme (362 aa).

Active-site residues include Glu11 and Glu14. Ser71 acts as the Schiff-base intermediate with substrate; via pyruvic acid in catalysis. Ser71 carries the pyruvic acid (Ser); by autocatalysis modification. The Proton donor; for catalytic activity role is filled by Cys85. Residues Ser234 and His247 each act as proton acceptor; for processing activity in the active site.

Belongs to the eukaryotic AdoMetDC family. It depends on pyruvate as a cofactor. Is synthesized initially as an inactive proenzyme. Formation of the active enzyme involves a self-maturation process in which the active site pyruvoyl group is generated from an internal serine residue via an autocatalytic post-translational modification. Two non-identical subunits are generated from the proenzyme in this reaction, and the pyruvate is formed at the N-terminus of the alpha chain, which is derived from the carboxyl end of the proenzyme. The post-translation cleavage follows an unusual pathway, termed non-hydrolytic serinolysis, in which the side chain hydroxyl group of the serine supplies its oxygen atom to form the C-terminus of the beta chain, while the remainder of the serine residue undergoes an oxidative deamination to produce ammonia and the pyruvoyl group blocking the N-terminus of the alpha chain.

The catalysed reaction is S-adenosyl-L-methionine + H(+) = S-adenosyl 3-(methylsulfanyl)propylamine + CO2. Its pathway is amine and polyamine biosynthesis; S-adenosylmethioninamine biosynthesis; S-adenosylmethioninamine from S-adenosyl-L-methionine: step 1/1. In Ipomoea nil (Japanese morning glory), this protein is S-adenosylmethionine decarboxylase proenzyme (SAMDC).